Here is a 1237-residue protein sequence, read N- to C-terminus: U3 small nucleolar RNA-associated protein 22 (1237 aa).

Positions 1–78 (MATSVKRKAS…TNTAATRHNG (78 aa)) are disordered. Serine 10 and serine 58 each carry phosphoserine. Position 60 is a phosphothreonine (threonine 60). Residues 61 to 78 (SPESNEVATNTAATRHNG) show a composition bias toward polar residues. Serine 64 carries the post-translational modification Phosphoserine.

Belongs to the NRAP family. As to quaternary structure, interacts with snoRNA U3. Interacts with MPP10. Component of the ribosomal small subunit (SSU) processome composed of at least 40 protein subunits and snoRNA U3. Interacts with UBP10.

The protein resides in the nucleus. The protein localises to the nucleolus. Functionally, involved in nucleolar processing of pre-18S ribosomal RNA and ribosome assembly. In Saccharomyces cerevisiae (strain ATCC 204508 / S288c) (Baker's yeast), this protein is U3 small nucleolar RNA-associated protein 22 (UTP22).